Consider the following 462-residue polypeptide: Glycine--tRNA ligase (462 aa).

Positions 100 and 174 each coordinate substrate. ATP contacts are provided by residues 206-208 (RNE), 216-221 (FRTREF), 290-291 (EL), and 334-337 (GADR). 221 to 225 (FEQME) is a binding site for substrate. Residue 330-334 (EPSLG) coordinates substrate.

The protein belongs to the class-II aminoacyl-tRNA synthetase family. As to quaternary structure, homodimer.

It is found in the cytoplasm. The enzyme catalyses tRNA(Gly) + glycine + ATP = glycyl-tRNA(Gly) + AMP + diphosphate. Its function is as follows. Catalyzes the attachment of glycine to tRNA(Gly). This is Glycine--tRNA ligase from Acetivibrio thermocellus (strain ATCC 27405 / DSM 1237 / JCM 9322 / NBRC 103400 / NCIMB 10682 / NRRL B-4536 / VPI 7372) (Clostridium thermocellum).